Here is a 74-residue protein sequence, read N- to C-terminus: Large ribosomal subunit protein uL29 (74 aa).

The protein belongs to the universal ribosomal protein uL29 family.

This Streptomyces avermitilis (strain ATCC 31267 / DSM 46492 / JCM 5070 / NBRC 14893 / NCIMB 12804 / NRRL 8165 / MA-4680) protein is Large ribosomal subunit protein uL29.